The chain runs to 214 residues: Thymidylate kinase (214 aa).

9–16 (GIEGCGKT) is a binding site for ATP.

This sequence belongs to the thymidylate kinase family.

The enzyme catalyses dTMP + ATP = dTDP + ADP. Functionally, phosphorylation of dTMP to form dTDP in both de novo and salvage pathways of dTTP synthesis. The chain is Thymidylate kinase from Geotalea daltonii (strain DSM 22248 / JCM 15807 / FRC-32) (Geobacter daltonii).